The following is a 156-amino-acid chain: ATP synthase subunit b (156 aa).

A helical transmembrane segment spans residues Leu7–Pro27.

The protein belongs to the ATPase B chain family. F-type ATPases have 2 components, F(1) - the catalytic core - and F(0) - the membrane proton channel. F(1) has five subunits: alpha(3), beta(3), gamma(1), delta(1), epsilon(1). F(0) has three main subunits: a(1), b(2) and c(10-14). The alpha and beta chains form an alternating ring which encloses part of the gamma chain. F(1) is attached to F(0) by a central stalk formed by the gamma and epsilon chains, while a peripheral stalk is formed by the delta and b chains.

It is found in the cell inner membrane. Its function is as follows. F(1)F(0) ATP synthase produces ATP from ADP in the presence of a proton or sodium gradient. F-type ATPases consist of two structural domains, F(1) containing the extramembraneous catalytic core and F(0) containing the membrane proton channel, linked together by a central stalk and a peripheral stalk. During catalysis, ATP synthesis in the catalytic domain of F(1) is coupled via a rotary mechanism of the central stalk subunits to proton translocation. Functionally, component of the F(0) channel, it forms part of the peripheral stalk, linking F(1) to F(0). The protein is ATP synthase subunit b of Neisseria gonorrhoeae (strain NCCP11945).